Consider the following 437-residue polypeptide: Probable N-acetylmuramidase (437 aa).

An N-terminal signal peptide occupies residues 1-57; it reads MPVSRVKVKNRHLKKKTKKPLAFYKPATKFAGAVLIAGTLTTTHELLLQQTSPMVQA. Disordered regions lie at residues 217 to 244, 290 to 320, and 367 to 392; these read SSAGNTNSGGSTTTITNNNSGTNSSSTT, ASSTNSGGSNNSASTTPTTSVTPAKPTSQTT, and AASNPSTGSGSTATNNSNSTSSNSNA. The 44-residue stretch at 243–286 folds into the LysM 1 domain; the sequence is TTYTVKSGDTLWGISQRYGISVAQIQSANNLKSTIIYIGQKLVL. The segment covering 290-317 has biased composition (low complexity); the sequence is ASSTNSGGSNNSASTTPTTSVTPAKPTS. Positions 319–362 constitute a LysM 2 domain; it reads TTVKVKSGDTLWALSVKYKTSIAQLKSWNHLSSDTIYIGQNLIV. The LysM 3 domain maps to 393–436; sequence SIHKVVKGDTLWGLSQKSGSPIASIKAWNHLSSDTILIGQYLRI.

It belongs to the glycosyl hydrolase 73 family.

Its subcellular location is the secreted. It catalyses the reaction Hydrolysis of (1-&gt;4)-beta-linkages between N-acetylmuramic acid and N-acetyl-D-glucosamine residues in a peptidoglycan and between N-acetyl-D-glucosamine residues in chitodextrins.. Functionally, hydrolyzes the cell wall of L.lactis and M.lysodeikticus. Required for cell separation during growth. The polypeptide is Probable N-acetylmuramidase (acmA) (Lactococcus lactis subsp. cremoris (strain MG1363)).